A 166-amino-acid chain; its full sequence is NADPH-dependent 7-cyano-7-deazaguanine reductase (166 aa).

The Thioimide intermediate role is filled by cysteine 57. Aspartate 64 acts as the Proton donor in catalysis. Substrate-binding positions include 79–81 (VES) and 98–99 (HE).

It belongs to the GTP cyclohydrolase I family. QueF type 1 subfamily.

Its subcellular location is the cytoplasm. The catalysed reaction is 7-aminomethyl-7-carbaguanine + 2 NADP(+) = 7-cyano-7-deazaguanine + 2 NADPH + 3 H(+). The protein operates within tRNA modification; tRNA-queuosine biosynthesis. Functionally, catalyzes the NADPH-dependent reduction of 7-cyano-7-deazaguanine (preQ0) to 7-aminomethyl-7-deazaguanine (preQ1). The protein is NADPH-dependent 7-cyano-7-deazaguanine reductase of Staphylococcus saprophyticus subsp. saprophyticus (strain ATCC 15305 / DSM 20229 / NCIMB 8711 / NCTC 7292 / S-41).